Reading from the N-terminus, the 78-residue chain is Mitochondrial import inner membrane translocase subunit Tim9 (78 aa).

The Twin CX3C motif motif lies at 24-48 (CFTSCVNEFGSRTVNAKEESCANNC). 2 disulfides stabilise this stretch: cysteine 24–cysteine 48 and cysteine 28–cysteine 44.

This sequence belongs to the small Tim family. Heterohexamer; composed of 3 copies of tim-9/tin-9.1 and 3 copies of tim-10/tin-10, named soluble 70 kDa complex. The complex associates with the tim-22 component of the TIM22 complex. Interacts with multi-pass transmembrane proteins in transit.

It is found in the mitochondrion inner membrane. Mitochondrial intermembrane chaperone that participates in the import and insertion of multi-pass transmembrane proteins into the mitochondrial inner membrane. May also be required for the transfer of beta-barrel precursors from the TOM complex to the sorting and assembly machinery (SAM complex) of the outer membrane. Acts as a chaperone-like protein that protects the hydrophobic precursors from aggregation and guide them through the mitochondrial intermembrane space. The polypeptide is Mitochondrial import inner membrane translocase subunit Tim9 (tin-9.1) (Caenorhabditis briggsae).